A 380-amino-acid polypeptide reads, in one-letter code: MNVFKQQLEQLGAQNQYRSIPDLIHQGRYITRENRKMLNMSSNDYLGLASDENLRRSFLQQYGGNFPSFTSSSSRLLTGNFPIYTDLEELVAQRFQRESALLFNSGYHANLGILPALTTTKSLILADKFVHASMIDGIRLSRCAFSRYRHNDYEHLKNLLEKNVGKFDRTFIVTESVFSMDGDVADLKQLVQLKKQFPNTYLYVDEAHAIGVYGQNGLGIAERDNLIAEIDLLVGTFGKALASVGAYAVCNQVLKECLINQMRPLIFSTALPPFNVAWTYFIFERLPQFSKERSHLEQLSAFLRREVAHRTQIMPSQTCIVPYILGGNEAALAKAEYLQRQGYYCLPIRPPTVPKNTSRIRLSLTADMTTDEVRQFAVCL.

Arginine 18 provides a ligand contact to substrate. 106 to 107 (GY) provides a ligand contact to pyridoxal 5'-phosphate. Histidine 131 serves as a coordination point for substrate. Pyridoxal 5'-phosphate is bound by residues serine 179, 205–208 (DEAH), and 236–239 (TFGK). At lysine 239 the chain carries N6-(pyridoxal phosphate)lysine. Threonine 352 is a substrate binding site.

This sequence belongs to the class-II pyridoxal-phosphate-dependent aminotransferase family. BioF subfamily. In terms of assembly, homodimer. It depends on pyridoxal 5'-phosphate as a cofactor.

It carries out the reaction 6-carboxyhexanoyl-[ACP] + L-alanine + H(+) = (8S)-8-amino-7-oxononanoate + holo-[ACP] + CO2. The protein operates within cofactor biosynthesis; biotin biosynthesis. Functionally, catalyzes the decarboxylative condensation of pimeloyl-[acyl-carrier protein] and L-alanine to produce 8-amino-7-oxononanoate (AON), [acyl-carrier protein], and carbon dioxide. The protein is Putative 8-amino-7-oxononanoate synthase (bioF) of Neisseria meningitidis serogroup C / serotype 2a (strain ATCC 700532 / DSM 15464 / FAM18).